Reading from the N-terminus, the 294-residue chain is UDP-3-O-acyl-N-acetylglucosamine deacetylase (294 aa).

Positions 75, 232, and 236 each coordinate Zn(2+). H259 functions as the Proton donor in the catalytic mechanism.

This sequence belongs to the LpxC family. Requires Zn(2+) as cofactor.

It catalyses the reaction a UDP-3-O-[(3R)-3-hydroxyacyl]-N-acetyl-alpha-D-glucosamine + H2O = a UDP-3-O-[(3R)-3-hydroxyacyl]-alpha-D-glucosamine + acetate. The protein operates within glycolipid biosynthesis; lipid IV(A) biosynthesis; lipid IV(A) from (3R)-3-hydroxytetradecanoyl-[acyl-carrier-protein] and UDP-N-acetyl-alpha-D-glucosamine: step 2/6. Its function is as follows. Catalyzes the hydrolysis of UDP-3-O-myristoyl-N-acetylglucosamine to form UDP-3-O-myristoylglucosamine and acetate, the committed step in lipid A biosynthesis. The sequence is that of UDP-3-O-acyl-N-acetylglucosamine deacetylase from Campylobacter jejuni subsp. jejuni serotype O:6 (strain 81116 / NCTC 11828).